A 127-amino-acid polypeptide reads, in one-letter code: Modulator protein MzrA (127 aa).

Residues 1-10 (MVISPLALRR) are Cytoplasmic-facing. Residues 11-31 (LSYGLIALVLLSALILVWTAL) traverse the membrane as a helical segment. Over 32 to 127 (QRQESTLAIR…RLRDTSHRFG (96 aa)) the chain is Periplasmic.

It belongs to the MzrA family. As to quaternary structure, interacts with EnvZ.

It localises to the cell inner membrane. Modulates the activity of the EnvZ/OmpR two-component regulatory system, probably by directly modulating EnvZ enzymatic activity and increasing stability of phosphorylated OmpR. This Enterobacter sp. (strain 638) protein is Modulator protein MzrA.